Here is a 412-residue protein sequence, read N- to C-terminus: MTANPTSIHQRLDRRLSGFSLEQPFYTSPEVYALDLQHIFYKQWLYAVPVCQLAKAGSYTTLRVGAYEVVIVRSRDGEVRAFHNSCRHRGSLICKARQGQVAKLVCPYHQWTYELDGKLIWANDMGPDFDASKYGLKPVNLRNLDGLIYICLSDTPPDFQTFAQLARPYLEVHDLKDAKVAFTSTIIEKGNWKLVWENNRECYHCSSNHPALCRSFPLDPEVAGVQADGGVSKKLQAHFDRCEAAGTPAQFVLAGDGQYRLARMPLQEKALSYTMDGKAAVSRHLGRVAPPDAGTLLMFHYPSTWNHFLPDHSLTFRVMPISPTETEVTTTWLVHKDAVEGVDYDLKRLTEVWIATNDEDREIVETNQQGILSPAYVPGPYSPGQESGVMQFVDWYAASLERALAPRQVAAE.

The region spanning 45–150 (LYAVPVCQLA…LRNLDGLIYI (106 aa)) is the Rieske domain. Cysteine 86, histidine 88, cysteine 106, and histidine 109 together coordinate [2Fe-2S] cluster. Residues histidine 204, histidine 209, and aspartate 360 each contribute to the Fe cation site.

Belongs to the bacterial ring-hydroxylating dioxygenase alpha subunit family. Homotrimer. The system is probably composed of an oxygenase subunit (Stc2) and two reductase subunits (Stc3 and Stc4). [2Fe-2S] cluster is required as a cofactor. The cofactor is Fe cation.

The enzyme catalyses L-proline betaine + NADH + O2 + H(+) = N-methyl-L-proline + formaldehyde + NAD(+) + H2O. It catalyses the reaction L-proline betaine + NADPH + O2 + H(+) = N-methyl-L-proline + formaldehyde + NADP(+) + H2O. Its function is as follows. Monooxygenase involved in the catabolism of stachydrine (L-proline betaine), a source of carbon and nitrogen. Part of a Rieske-type oxygenase system that catalyzes the demethylation of stachydrine to produce N-methyl-L-proline (monomethylproline). Stc2 is the catalytic subunit. This is Stachydrine N-demethylase from Rhizobium meliloti (strain 1021) (Ensifer meliloti).